The sequence spans 37 residues: Large ribosomal subunit protein bL36 (37 aa).

The protein belongs to the bacterial ribosomal protein bL36 family.

This chain is Large ribosomal subunit protein bL36, found in Idiomarina loihiensis (strain ATCC BAA-735 / DSM 15497 / L2-TR).